The chain runs to 446 residues: Adenylosuccinate synthetase (446 aa).

Residues 21-27 and 49-51 each bind GTP; these read GDEGKGK and GHT. Catalysis depends on D22, which acts as the Proton acceptor. 2 residues coordinate Mg(2+): D22 and G49. IMP contacts are provided by residues 22-25, 47-50, T141, R155, Q236, T251, and R319; these read DEGK and NAGH. Residue H50 is the Proton donor of the active site. 315–321 lines the substrate pocket; that stretch reads VTTGRSR. GTP contacts are provided by residues R321, 347 to 349, and 429 to 431; these read KLD and STS.

The protein belongs to the adenylosuccinate synthetase family. As to quaternary structure, homodimer. The cofactor is Mg(2+).

The protein localises to the cytoplasm. It catalyses the reaction IMP + L-aspartate + GTP = N(6)-(1,2-dicarboxyethyl)-AMP + GDP + phosphate + 2 H(+). Its pathway is purine metabolism; AMP biosynthesis via de novo pathway; AMP from IMP: step 1/2. Functionally, plays an important role in the de novo pathway of purine nucleotide biosynthesis. Catalyzes the first committed step in the biosynthesis of AMP from IMP. This Polaromonas naphthalenivorans (strain CJ2) protein is Adenylosuccinate synthetase.